The following is a 504-amino-acid chain: ATP synthase subunit alpha (504 aa).

170 to 177 (GDRQTGKT) contacts ATP.

The protein belongs to the ATPase alpha/beta chains family. F-type ATPases have 2 components, CF(1) - the catalytic core - and CF(0) - the membrane proton channel. CF(1) has five subunits: alpha(3), beta(3), gamma(1), delta(1), epsilon(1). CF(0) has four main subunits: a, b, b' and c.

It localises to the cellular thylakoid membrane. The catalysed reaction is ATP + H2O + 4 H(+)(in) = ADP + phosphate + 5 H(+)(out). Produces ATP from ADP in the presence of a proton gradient across the membrane. The alpha chain is a regulatory subunit. The chain is ATP synthase subunit alpha from Prochlorococcus marinus (strain MIT 9211).